Reading from the N-terminus, the 251-residue chain is Small ribosomal subunit protein uS2 (251 aa).

Position 2 is an N-acetylserine (Ser2). The tract at residues 213–251 (QVAEEATAAADEDVKEEVAEEQTEAADWAEGNTEEVASW) is disordered. Positions 222–236 (ADEDVKEEVAEEQTE) are enriched in acidic residues.

This sequence belongs to the universal ribosomal protein uS2 family. In terms of assembly, component of the small ribosomal subunit. Mature ribosomes consist of a small (40S) and a large (60S) subunit. The 40S subunit contains about 33 different proteins and 1 molecule of RNA (18S). The 60S subunit contains about 49 different proteins and 3 molecules of RNA (25S, 5.8S and 5S). Interacts with RPS21.

Its subcellular location is the cytoplasm. Functionally, required for the assembly and/or stability of the 40S ribosomal subunit. Required for the processing of the 20S rRNA-precursor to mature 18S rRNA in a late step of the maturation of 40S ribosomal subunits. The polypeptide is Small ribosomal subunit protein uS2 (Lachancea thermotolerans (strain ATCC 56472 / CBS 6340 / NRRL Y-8284) (Yeast)).